A 334-amino-acid chain; its full sequence is Formamidase (334 aa).

The CN hydrolase domain maps to 14–260 (FLVAAIQFPV…WEIVTGEIYP (247 aa)). Glutamate 60 acts as the Proton acceptor in catalysis. Lysine 133 acts as the Proton donor in catalysis. Cysteine 166 acts as the Nucleophile in catalysis.

Belongs to the carbon-nitrogen hydrolase superfamily. Aliphatic amidase family.

It catalyses the reaction formamide + H2O = formate + NH4(+). Functionally, is an aliphatic amidase with a restricted substrate specificity, as it only hydrolyzes formamide. The polypeptide is Formamidase (Helicobacter acinonychis (strain Sheeba)).